The following is a 357-amino-acid chain: Velvet complex subunit 2 (357 aa).

Residues 32-341 form the Velvet domain; it reads RRAERKYKLE…AQQGIKIPIR (310 aa).

The protein belongs to the velvet family. VelB subfamily. As to quaternary structure, component of the heterotrimeric velvet complex composed of LAE1, VEL1 and VEL2; VEL1A acting as a bridging protein between LAE1 and VEL2. Forms a heterodimeric complex with VOS1; the formation of the VEL2-VOS1 complex is light-dependent.

The protein localises to the nucleus. Its subcellular location is the cytoplasm. Component of the velvet transcription factor complex that controls sexual/asexual developmental ratio in response to light, promoting sexual development in the darkness while stimulating asexual sporulation under illumination. The velvet complex acts as a global regulator for secondary metabolite gene expression. Component of the VEL2-VOS1 heterodimeric complex that plays a dual role in activating genes associated with spore maturation and repressing certain development-associated genes. The complex binds DNA through the DNA-binding domain of VOS1 that recognizes an 11-nucleotide consensus sequence 5'-CTGGCCGCGGC-3' consisting of two motifs in the promoters of key developmental regulatory genes. The VEL2-VOS1 complex is required for normal pseudothecium development and regulates asexual spore compartmentalization, pigmentation and germination. The chain is Velvet complex subunit 2 from Cochliobolus heterostrophus (strain C5 / ATCC 48332 / race O) (Southern corn leaf blight fungus).